The chain runs to 884 residues: Translation initiation factor IF-2 (884 aa).

A disordered region spans residues 93–288 (VNTPEAEQAK…KGKRKPSTLQ (196 aa)). Residues 99–209 (EQAKAEEQAQ…KMAAENEGKW (111 aa)) are compositionally biased toward basic and acidic residues. Polar residues predominate over residues 216–229 (QTESADYHVTTSQH). A compositionally biased stretch (basic and acidic residues) spans 231 to 246 (RAAEDENDAKVEGDRR). Over residues 247–261 (SRTRGGKATKQKKGN) the composition is skewed to basic residues. Residues 262–275 (KLSESKADREEARA) show a composition bias toward basic and acidic residues. The region spanning 383–552 (HRAPVVTIMG…LLQAEVLELK (170 aa)) is the tr-type G domain. The segment at 392 to 399 (GHVDHGKT) is G1. 392-399 (GHVDHGKT) is a binding site for GTP. A G2 region spans residues 417–421 (GITQH). Residues 438–441 (DTPG) are G3. GTP-binding positions include 438 to 442 (DTPGH) and 492 to 495 (NKID). The segment at 492 to 495 (NKID) is G4. Residues 528–530 (SAK) form a G5 region.

It belongs to the TRAFAC class translation factor GTPase superfamily. Classic translation factor GTPase family. IF-2 subfamily.

It is found in the cytoplasm. Its function is as follows. One of the essential components for the initiation of protein synthesis. Protects formylmethionyl-tRNA from spontaneous hydrolysis and promotes its binding to the 30S ribosomal subunits. Also involved in the hydrolysis of GTP during the formation of the 70S ribosomal complex. In Yersinia pestis bv. Antiqua (strain Angola), this protein is Translation initiation factor IF-2.